The following is a 555-amino-acid chain: CTP synthase (555 aa).

The tract at residues 1–267 (MPKFVFVTGG…CKEVLEFLDL (267 aa)) is amidoligase domain. Ser-13 contacts CTP. Residue Ser-13 participates in UTP binding. Residues 14 to 19 (SIGKGI) and Asp-71 contribute to the ATP site. Positions 71 and 141 each coordinate Mg(2+). Residues 148 to 150 (DIE), 188 to 193 (KTKPTQ), and Lys-224 contribute to the CTP site. Residues 188 to 193 (KTKPTQ) and Lys-224 contribute to the UTP site. A Glutamine amidotransferase type-1 domain is found at 292–534 (KVAVVGKYVQ…IAAAQSRLPR (243 aa)). Gly-354 is a binding site for L-glutamine. The active-site Nucleophile; for glutamine hydrolysis is the Cys-381. L-glutamine-binding positions include 382-385 (LGMQ), Glu-405, and Arg-462. Residues His-507 and Glu-509 contribute to the active site. Residues 532–555 (LPRSPQEALKQTQINSPNQSKNNP) form a disordered region. The span at 540-555 (LKQTQINSPNQSKNNP) shows a compositional bias: polar residues.

It belongs to the CTP synthase family. In terms of assembly, homotetramer.

It carries out the reaction UTP + L-glutamine + ATP + H2O = CTP + L-glutamate + ADP + phosphate + 2 H(+). The enzyme catalyses L-glutamine + H2O = L-glutamate + NH4(+). The catalysed reaction is UTP + NH4(+) + ATP = CTP + ADP + phosphate + 2 H(+). It participates in pyrimidine metabolism; CTP biosynthesis via de novo pathway; CTP from UDP: step 2/2. Its activity is regulated as follows. Allosterically activated by GTP, when glutamine is the substrate; GTP has no effect on the reaction when ammonia is the substrate. The allosteric effector GTP functions by stabilizing the protein conformation that binds the tetrahedral intermediate(s) formed during glutamine hydrolysis. Inhibited by the product CTP, via allosteric rather than competitive inhibition. In terms of biological role, catalyzes the ATP-dependent amination of UTP to CTP with either L-glutamine or ammonia as the source of nitrogen. Regulates intracellular CTP levels through interactions with the four ribonucleotide triphosphates. This Prochlorococcus marinus (strain MIT 9211) protein is CTP synthase.